The primary structure comprises 145 residues: Large ribosomal subunit protein uL16 (145 aa).

This sequence belongs to the universal ribosomal protein uL16 family. Part of the 50S ribosomal subunit.

In terms of biological role, binds 23S rRNA and is also seen to make contacts with the A and possibly P site tRNAs. The sequence is that of Large ribosomal subunit protein uL16 from Lactobacillus gasseri (strain ATCC 33323 / DSM 20243 / BCRC 14619 / CIP 102991 / JCM 1131 / KCTC 3163 / NCIMB 11718 / NCTC 13722 / AM63).